The primary structure comprises 372 residues: GDP-mannose 4,6 dehydratase (372 aa).

The disordered stretch occupies residues 1 to 22; that stretch reads MAHAPASCPSSRNSGDGDKGKP. Position 2 is an N-acetylalanine (A2). NADP(+)-binding positions include 30 to 35, 55 to 58, 86 to 87, 108 to 112, and Y123; these read GITGQD, RRSS, DL, and LGAQS. The active site involves T155. Catalysis depends on nucleophile residues E157 and Y179. Residues K183, H209, and R214 each contribute to the NADP(+) site. Residue Y323 is modified to Phosphotyrosine.

This sequence belongs to the NAD(P)-dependent epimerase/dehydratase family. GDP-mannose 4,6-dehydratase subfamily. NADP(+) is required as a cofactor.

The enzyme catalyses GDP-alpha-D-mannose = GDP-4-dehydro-alpha-D-rhamnose + H2O. Its pathway is nucleotide-sugar biosynthesis; GDP-L-fucose biosynthesis via de novo pathway; GDP-L-fucose from GDP-alpha-D-mannose: step 1/2. Inhibited by GDP-fucose. Functionally, catalyzes the conversion of GDP-D-mannose to GDP-4-dehydro-6-deoxy-D-mannose. In Cricetulus griseus (Chinese hamster), this protein is GDP-mannose 4,6 dehydratase (GMDS).